The primary structure comprises 300 residues: ATP-dependent (S)-NAD(P)H-hydrate dehydratase (300 aa).

Residues 7 to 289 (IEARLKSIIP…ESIPSVFDQV (283 aa)) form the YjeF C-terminal domain. Residues Gly-107 and 160–166 (NVMEYRR) contribute to the (6S)-NADPHX site. ATP is bound by residues 194 to 198 (KGQVD) and 213 to 222 (GSPRRCGGQG). Asp-223 is a (6S)-NADPHX binding site.

This sequence belongs to the NnrD/CARKD family. Requires Mg(2+) as cofactor.

It carries out the reaction (6S)-NADHX + ATP = ADP + phosphate + NADH + H(+). It catalyses the reaction (6S)-NADPHX + ATP = ADP + phosphate + NADPH + H(+). In terms of biological role, catalyzes the dehydration of the S-form of NAD(P)HX at the expense of ATP, which is converted to ADP. Together with NAD(P)HX epimerase, which catalyzes the epimerization of the S- and R-forms, the enzyme allows the repair of both epimers of NAD(P)HX, a damaged form of NAD(P)H that is a result of enzymatic or heat-dependent hydration. The sequence is that of ATP-dependent (S)-NAD(P)H-hydrate dehydratase from Entamoeba histolytica (strain ATCC 30459 / HM-1:IMSS / ABRM).